A 318-amino-acid polypeptide reads, in one-letter code: NADH-ubiquinone oxidoreductase chain 1 (318 aa).

Helical transmembrane passes span 3 to 23 (LINV…LTLL), 69 to 89 (LMFT…WIPI), 100 to 120 (LGVL…LWSG), 135 to 155 (AVAQ…SIMM), 171 to 191 (HMWL…STLA), 223 to 243 (FFLA…ILFF), 253 to 273 (ELHT…FLWV), and 293 to 313 (FLPL…TFAG).

It belongs to the complex I subunit 1 family.

It is found in the mitochondrion inner membrane. The enzyme catalyses a ubiquinone + NADH + 5 H(+)(in) = a ubiquinol + NAD(+) + 4 H(+)(out). Its function is as follows. Core subunit of the mitochondrial membrane respiratory chain NADH dehydrogenase (Complex I) that is believed to belong to the minimal assembly required for catalysis. Complex I functions in the transfer of electrons from NADH to the respiratory chain. The immediate electron acceptor for the enzyme is believed to be ubiquinone. This chain is NADH-ubiquinone oxidoreductase chain 1 (MT-ND1), found in Dasypus novemcinctus (Nine-banded armadillo).